We begin with the raw amino-acid sequence, 184 residues long: Ribosome-recycling factor (184 aa).

This sequence belongs to the RRF family.

The protein resides in the cytoplasm. Functionally, responsible for the release of ribosomes from messenger RNA at the termination of protein biosynthesis. May increase the efficiency of translation by recycling ribosomes from one round of translation to another. This chain is Ribosome-recycling factor, found in Acinetobacter baumannii (strain SDF).